A 198-amino-acid polypeptide reads, in one-letter code: Recombination protein RecR (198 aa).

Residues 57-72 (CEKCNTFTEAQICEVC) form a C4-type zinc finger. Residues 80–175 (TLLCVVETPA…AVTRLARGVP (96 aa)) enclose the Toprim domain.

It belongs to the RecR family.

Its function is as follows. May play a role in DNA repair. It seems to be involved in an RecBC-independent recombinational process of DNA repair. It may act with RecF and RecO. In Paraburkholderia xenovorans (strain LB400), this protein is Recombination protein RecR.